A 395-amino-acid polypeptide reads, in one-letter code: MKRKQQEDDNDDGVEKAVSPVLATTSNTMSTDLLLQSSSKLSQKQDYIFHGGRRHVRPYYFEFISHVNKRWTGKTIVDLFADEFKGRPRDYYVGAVKSGRIKVDGEIVPVSYIVKSSQKITHFLHRHEPPVMIDDVVILHQEPDVVTVCKPASVPVHPCGQYRKNTIVGILDAEHDLGTLFPIHRLDRLVSGLLIIARTAAKADFFRQQIEGGMVKKRYIAKVIGVFPEDEMIVDANINYNGSEGRSTAEDANSSGDDKKVKGKPACTKFTRIDTNGTHSLVSCEPVTGRTHQIRVHLQYTGHPIANDPLYLNQHIDNLETYIAKRIDAGERKIVSPDDYVYSSEDFSIDPMCTNCPKLIPQGYEEHDEALWLHCVQYCGTGWEYECPYPSWASL.

Residues 1-21 (MKRKQQEDDNDDGVEKAVSPV) are disordered. Residues 74–136 (KTIVDLFADE…HEPPVMIDDV (63 aa)) form the S4 RNA-binding domain. Residue Asp187 is part of the active site. Over residues 244–255 (EGRSTAEDANSS) the composition is skewed to polar residues. Positions 244–263 (EGRSTAEDANSSGDDKKVKG) are disordered.

The protein belongs to the pseudouridine synthase RluA family.

The catalysed reaction is a uridine in RNA = a pseudouridine in RNA. The protein is RNA pseudouridine synthase 7 of Arabidopsis thaliana (Mouse-ear cress).